A 154-amino-acid polypeptide reads, in one-letter code: Myoglobin (154 aa).

Residues 2 to 148 form the Globin domain; sequence GLSDGEWQLV…FRNDMAAQYK (147 aa). Position 4 is a phosphoserine (Ser-4). His-65 is a binding site for nitrite. Residue His-65 participates in O2 binding. Thr-68 is modified (phosphothreonine). His-94 provides a ligand contact to heme b.

It belongs to the globin family. Monomeric.

The protein localises to the cytoplasm. It is found in the sarcoplasm. It carries out the reaction Fe(III)-heme b-[protein] + nitric oxide + H2O = Fe(II)-heme b-[protein] + nitrite + 2 H(+). The catalysed reaction is H2O2 + AH2 = A + 2 H2O. Monomeric heme protein which primary function is to store oxygen and facilitate its diffusion within muscle tissues. Reversibly binds oxygen through a pentacoordinated heme iron and enables its timely and efficient release as needed during periods of heightened demand. Depending on the oxidative conditions of tissues and cells, and in addition to its ability to bind oxygen, it also has a nitrite reductase activity whereby it regulates the production of bioactive nitric oxide. Under stress conditions, like hypoxia and anoxia, it also protects cells against reactive oxygen species thanks to its pseudoperoxidase activity. In Cervus elaphus (Red deer), this protein is Myoglobin (MB).